We begin with the raw amino-acid sequence, 264 residues long: Thymidylate synthase (264 aa).

DUMP is bound at residue arginine 21. Histidine 51 provides a ligand contact to (6R)-5,10-methylene-5,6,7,8-tetrahydrofolate. 126-127 (RR) lines the dUMP pocket. Catalysis depends on cysteine 146, which acts as the Nucleophile. Residues 166 to 169 (RSCD), asparagine 177, and 207 to 209 (HLY) each bind dUMP. Aspartate 169 lines the (6R)-5,10-methylene-5,6,7,8-tetrahydrofolate pocket. Alanine 263 lines the (6R)-5,10-methylene-5,6,7,8-tetrahydrofolate pocket.

The protein belongs to the thymidylate synthase family. Bacterial-type ThyA subfamily. In terms of assembly, homodimer.

It localises to the cytoplasm. It catalyses the reaction dUMP + (6R)-5,10-methylene-5,6,7,8-tetrahydrofolate = 7,8-dihydrofolate + dTMP. The protein operates within pyrimidine metabolism; dTTP biosynthesis. Catalyzes the reductive methylation of 2'-deoxyuridine-5'-monophosphate (dUMP) to 2'-deoxythymidine-5'-monophosphate (dTMP) while utilizing 5,10-methylenetetrahydrofolate (mTHF) as the methyl donor and reductant in the reaction, yielding dihydrofolate (DHF) as a by-product. This enzymatic reaction provides an intracellular de novo source of dTMP, an essential precursor for DNA biosynthesis. The polypeptide is Thymidylate synthase (Shigella dysenteriae serotype 1 (strain Sd197)).